A 501-amino-acid chain; its full sequence is Cytochrome P450 7A1 (501 aa).

Residues isoleucine 4–methionine 24 traverse the membrane as a helical segment. Cysteine 441 is a binding site for heme.

It belongs to the cytochrome P450 family. Heme is required as a cofactor.

It localises to the endoplasmic reticulum membrane. The protein resides in the microsome membrane. The enzyme catalyses cholesterol + reduced [NADPH--hemoprotein reductase] + O2 = 7alpha-hydroxycholesterol + oxidized [NADPH--hemoprotein reductase] + H2O + H(+). The catalysed reaction is 4beta-hydroxycholesterol + reduced [NADPH--hemoprotein reductase] + O2 = 4beta,7alpha-dihydroxycholesterol + oxidized [NADPH--hemoprotein reductase] + H2O + H(+). It catalyses the reaction lathosterol + reduced [NADPH--hemoprotein reductase] + O2 = 7alpha,8alpha-epoxy-5alpha-cholestan-3beta-ol + oxidized [NADPH--hemoprotein reductase] + H2O + H(+). It carries out the reaction lathosterol + reduced [NADPH--hemoprotein reductase] + O2 = 5alpha-cholestan-7-oxo-3beta-ol + oxidized [NADPH--hemoprotein reductase] + H2O + H(+). The enzyme catalyses 7-dehydrocholesterol + reduced [NADPH--hemoprotein reductase] + O2 = 7-oxocholesterol + oxidized [NADPH--hemoprotein reductase] + H2O + H(+). The catalysed reaction is (24S)-hydroxycholesterol + reduced [NADPH--hemoprotein reductase] + O2 = (24S)-7alpha-dihydroxycholesterol + oxidized [NADPH--hemoprotein reductase] + H2O + H(+). It catalyses the reaction (24R)-hydroxycholesterol + reduced [NADPH--hemoprotein reductase] + O2 = (24R)-7alpha-dihydroxycholesterol + oxidized [NADPH--hemoprotein reductase] + H2O + H(+). It participates in lipid metabolism; bile acid biosynthesis. The protein operates within steroid metabolism; cholesterol degradation. In terms of biological role, a cytochrome P450 monooxygenase involved in the metabolism of endogenous cholesterol and its oxygenated derivatives (oxysterols). Mechanistically, uses molecular oxygen inserting one oxygen atom into a substrate, and reducing the second into a water molecule, with two electrons provided by NADPH via cytochrome P450 reductase (CPR; NADPH-ferrihemoprotein reductase). Functions as a critical regulatory enzyme of bile acid biosynthesis and cholesterol homeostasis. Catalyzes the hydroxylation of carbon hydrogen bond at 7-alpha position of cholesterol, a rate-limiting step in cholesterol catabolism and bile acid biosynthesis. 7-alpha hydroxylates several oxysterols, including 4beta-hydroxycholesterol and 24-hydroxycholesterol. Catalyzes the oxidation of the 7,8 double bond of 7-dehydrocholesterol and lathosterol with direct and predominant formation of the 7-keto derivatives. The protein is Cytochrome P450 7A1 (CYP7A1) of Sus scrofa (Pig).